The following is an 84-amino-acid chain: Conotoxin Tx8.1 (84 aa).

A signal peptide spans 1–19 (LKMGAMFVLLLLFTLASSH). Residues 20–44 (REGDIQARKTHLKSDFYRTLPRFAR) constitute a propeptide that is removed on maturation.

The protein belongs to the conotoxin S superfamily. In terms of processing, contains 5 disulfide bonds. In terms of tissue distribution, expressed by the venom duct.

Its subcellular location is the secreted. This is Conotoxin Tx8.1 from Conus textile (Cloth-of-gold cone).